We begin with the raw amino-acid sequence, 239 residues long: Phosducin-like protein 2 (239 aa).

Residues 26-87 (TEDELFDLIK…IQQMKVEAEL (62 aa)) adopt a coiled-coil conformation. Positions 36 to 196 (EAAEMATEAE…TTVNDIEWQL (161 aa)) constitute a Phosducin domain. Basic and acidic residues predominate over residues 42–59 (TEAEKNEKLENASLKDLK). Disordered stretches follow at residues 42 to 64 (TEAE…MEDD) and 212 to 239 (ITLA…DSDD). The segment at 90-239 (FGELKEISEP…DESDNSDSDD (150 aa)) is thioredoxin fold. Residues 214–224 (LARKKSQKSRY) show a composition bias toward basic residues. Positions 230–239 (DESDNSDSDD) are enriched in acidic residues.

The protein belongs to the phosducin family.

The protein is Phosducin-like protein 2 (phlp2) of Dictyostelium discoideum (Social amoeba).